Consider the following 324-residue polypeptide: Elongation factor P--(R)-beta-lysine ligase (324 aa).

75–77 is a substrate binding site; sequence SPE. Residues 99–101 and Asn-108 each bind ATP; that span reads RNK. Tyr-117 serves as a coordination point for substrate. 243-244 provides a ligand contact to ATP; the sequence is EL. Glu-250 is a substrate binding site. Gly-299 lines the ATP pocket.

This sequence belongs to the class-II aminoacyl-tRNA synthetase family. EpmA subfamily. In terms of assembly, homodimer.

The enzyme catalyses D-beta-lysine + L-lysyl-[protein] + ATP = N(6)-((3R)-3,6-diaminohexanoyl)-L-lysyl-[protein] + AMP + diphosphate + H(+). With EpmB is involved in the beta-lysylation step of the post-translational modification of translation elongation factor P (EF-P). Catalyzes the ATP-dependent activation of (R)-beta-lysine produced by EpmB, forming a lysyl-adenylate, from which the beta-lysyl moiety is then transferred to the epsilon-amino group of a conserved specific lysine residue in EF-P. This chain is Elongation factor P--(R)-beta-lysine ligase, found in Buchnera aphidicola subsp. Acyrthosiphon pisum (strain APS) (Acyrthosiphon pisum symbiotic bacterium).